Here is a 37-residue protein sequence, read N- to C-terminus: Cytochrome b6-f complex subunit 5 (37 aa).

The chain crosses the membrane as a helical span at residues 5 to 25 (LLCGIVLGLIPITLAGLFMAA).

Belongs to the PetG family. The 4 large subunits of the cytochrome b6-f complex are cytochrome b6, subunit IV (17 kDa polypeptide, PetD), cytochrome f and the Rieske protein, while the 4 small subunits are PetG, PetL, PetM and PetN. The complex functions as a dimer.

The protein localises to the cellular thylakoid membrane. Functionally, component of the cytochrome b6-f complex, which mediates electron transfer between photosystem II (PSII) and photosystem I (PSI), cyclic electron flow around PSI, and state transitions. PetG is required for either the stability or assembly of the cytochrome b6-f complex. The protein is Cytochrome b6-f complex subunit 5 of Synechococcus elongatus (strain ATCC 33912 / PCC 7942 / FACHB-805) (Anacystis nidulans R2).